A 766-amino-acid chain; its full sequence is Protein STB6 (766 aa).

The interval valine 447–serine 469 is disordered. Serine 514 carries the post-translational modification Phosphoserine.

To yeast STB2.

In terms of biological role, binds to SIN3. The chain is Protein STB6 (STB6) from Saccharomyces cerevisiae (strain ATCC 204508 / S288c) (Baker's yeast).